Reading from the N-terminus, the 236-residue chain is 3-oxoacyl-[acyl-carrier-protein] reductase (236 aa).

The residue at position 1 (Met-1) is an N-acetylmethionine. Residues 11–14 (SRGI) and 34–35 (RN) each bind NADP(+). Lys-40 is subject to N6-acetyllysine. 83–85 (AAG) lines the NADP(+) pocket. An N6-acetyllysine modification is found at Lys-96. Residue Ser-134 coordinates substrate. NADP(+)-binding positions include Tyr-147, Lys-151, and 180-182 (IHT). Tyr-147 acts as the Proton acceptor in catalysis. An N6-acetyllysine modification is found at Lys-194.

Belongs to the short-chain dehydrogenases/reductases (SDR) family. As to quaternary structure, homotetramer (in vitro). Heterotetramer with HSD17B8; contains two molecules each of HSD17B8 and CBR4. Does not form homotetramers when HSD17B8 is coexpressed, only heterotetramers (in vitro).

Its subcellular location is the mitochondrion matrix. It catalyses the reaction a (3R)-hydroxyacyl-[ACP] + NADP(+) = a 3-oxoacyl-[ACP] + NADPH + H(+). The enzyme catalyses a quinone + NADPH + H(+) = a quinol + NADP(+). It functions in the pathway lipid metabolism; fatty acid biosynthesis. Functionally, component of the heterotetramer complex KAR (3-ketoacyl-[acyl carrier protein] reductase or 3-ketoacyl-[ACP] reductase) that forms part of the mitochondrial fatty acid synthase (mtFAS). Beta-subunit of the KAR heterotetramer complex, responsible for the 3-ketoacyl-ACP reductase activity of the mtFAS, reduces 3-oxoacyl-[ACP] to (3R)-hydroxyacyl-[ACP] in a NADPH-dependent manner with no chain length preference, thereby participating in mitochondrial fatty acid biosynthesis. The homotetramer has NADPH-dependent quinone reductase activity (in vitro), hence could play a role in protection against cytotoxicity of exogenous quinones. As a heterotetramer, it can also reduce 9,10-phenanthrenequinone, 1,4-benzoquinone and various other o-quinones and p-quinones (in vitro). The sequence is that of 3-oxoacyl-[acyl-carrier-protein] reductase (Cbr4) from Rattus norvegicus (Rat).